A 265-amino-acid chain; its full sequence is HUWE1-associated protein modifying stress responses (265 aa).

Disordered regions lie at residues 1–22, 145–170, 195–218, and 240–265; these read MEDKKEEGESEIQEHGPEHWFS, RNSRAPPRLTVVSPNRATPTETGSSV, VRSSTPGSPTHVSGSSNTGRRRNG, and GTRKRTSAQCGDVITDSPTHKRNRMI. Polar residues-rich tracts occupy residues 156-170 and 195-212; these read VSPNRATPTETGSSV and VRSSTPGSPTHVSGSSNT.

This sequence belongs to the HAPSTR1 family. In terms of assembly, oligomer.

It is found in the nucleus. It localises to the cytoplasm. Functionally, acts as a central player within a network of stress response pathways promoting cellular adaptability. Functions as a negative regulator of TP53/P53 in the cellular response to telomere erosion and probably also DNA damage. The polypeptide is HUWE1-associated protein modifying stress responses (Xenopus tropicalis (Western clawed frog)).